The following is a 395-amino-acid chain: Beta-1,4-galactosyltransferase 3 (395 aa).

The Cytoplasmic segment spans residues 1-10 (MLRRLLERPC). A helical; Signal-anchor for type II membrane protein transmembrane segment spans residues 11 to 31 (TLALLVGSQLAVMMYLSLGGF). The Lumenal portion of the chain corresponds to 32–395 (RSLSALFGRD…ANHTAPHGSH (364 aa)). A glycan (N-linked (GlcNAc...) asparagine) is linked at Asn-57. A disulfide bond links Cys-79 and Cys-121. Residues 132-136 (PHRAR), 171-173 (FNR), 198-199 (VD), Tyr-228, and Trp-260 contribute to the UDP-alpha-D-galactose site. An intrachain disulfide couples Cys-192 to Cys-211. Asp-199 contributes to the Mn(2+) binding site. Residue 262–265 (GEDD) coordinates N-acetyl-D-glucosamine. His-293 is a binding site for Mn(2+). A UDP-alpha-D-galactose-binding site is contributed by 293 to 295 (HRG). Arg-305 contributes to the N-acetyl-D-glucosamine binding site. Residues Asn-339 and Asn-387 are each glycosylated (N-linked (GlcNAc...) asparagine). A disordered region spans residues 341–395 (TADIGTDPRGPRAPSGPRYPPGSSQAFRQEMLQRRPPARPGPLPTANHTAPHGSH).

Belongs to the glycosyltransferase 7 family. Requires Mn(2+) as cofactor.

The protein resides in the golgi apparatus. The protein localises to the golgi stack membrane. The enzyme catalyses an N-acetyl-beta-D-glucosaminyl derivative + UDP-alpha-D-galactose = a beta-D-galactosyl-(1-&gt;4)-N-acetyl-beta-D-glucosaminyl derivative + UDP + H(+). It catalyses the reaction N-acetyl-D-glucosamine + UDP-alpha-D-galactose = beta-D-galactosyl-(1-&gt;4)-N-acetyl-D-glucosamine + UDP + H(+). The catalysed reaction is a beta-D-GlcNAc-(1-&gt;3)-beta-D-Gal-(1-&gt;4)-beta-D-Glc-(1&lt;-&gt;1)-Cer(d18:1(4E)) + UDP-alpha-D-galactose = a neolactoside nLc4Cer(d18:1(4E)) + UDP + H(+). It carries out the reaction a beta-D-glucosylceramide + UDP-alpha-D-galactose = a beta-D-galactosyl-(1-&gt;4)-beta-D-glucosyl-(1&lt;-&gt;1)-ceramide + UDP + H(+). The enzyme catalyses a neolactoside IV(3)-beta-GlcNAc-nLc4Cer + UDP-alpha-D-galactose = a neolactoside nLc6Cer + UDP + H(+). It participates in protein modification; protein glycosylation. Responsible for the synthesis of complex-type N-linked oligosaccharides in many glycoproteins as well as the carbohydrate moieties of glycolipids. In Cricetulus griseus (Chinese hamster), this protein is Beta-1,4-galactosyltransferase 3 (B4GALT3).